Consider the following 160-residue polypeptide: Cytochrome b6-f complex subunit 4 (160 aa).

The next 3 membrane-spanning stretches (helical) occupy residues 36 to 56, 95 to 115, and 131 to 151; these read LLYV…ALAV, LLGV…PFIE, and TVFL…ALPL.

Belongs to the cytochrome b family. PetD subfamily. As to quaternary structure, the 4 large subunits of the cytochrome b6-f complex are cytochrome b6, subunit IV (17 kDa polypeptide, PetD), cytochrome f and the Rieske protein, while the 4 small subunits are PetG, PetL, PetM and PetN. The complex functions as a dimer.

The protein localises to the cellular thylakoid membrane. In terms of biological role, component of the cytochrome b6-f complex, which mediates electron transfer between photosystem II (PSII) and photosystem I (PSI), cyclic electron flow around PSI, and state transitions. This chain is Cytochrome b6-f complex subunit 4, found in Trichormus variabilis (strain ATCC 29413 / PCC 7937) (Anabaena variabilis).